A 285-amino-acid chain; its full sequence is Probable glucose uptake protein GlcU (285 aa).

10 helical membrane passes run 4–21 (FLAI…LFNV), 26–48 (GPYS…VYIF), 52–71 (VLTP…WALG), 84–106 (VSRT…GVIV), 110–132 (WSTI…GVIL), 153–175 (IIIL…LFNV), 180–197 (ALLP…LLTF), 210–227 (IIPG…FISQ), 232–254 (VATS…ILIL), and 266–283 (IVVG…LGIA).

This sequence belongs to the GRP transporter (TC 2.A.7.5) family.

The protein resides in the cell membrane. In terms of biological role, involved in the uptake of glucose. In Bacillus anthracis, this protein is Probable glucose uptake protein GlcU (glcU).